The sequence spans 125 residues: MPTISQLVRKGRKTLAAKSTAPALKECPQKRGVCTVVKTTTPKKPNSALRKIARVRLTNGYEVTAYIPGVGHNLQEHSVVLIRGGRVKDLPGVRYHIVRGTLDAAGVADRKQARSKYGAKKPKQK.

Aspartate 89 carries the 3-methylthioaspartic acid modification.

This sequence belongs to the universal ribosomal protein uS12 family. As to quaternary structure, part of the 30S ribosomal subunit. Contacts proteins S8 and S17. May interact with IF1 in the 30S initiation complex.

In terms of biological role, with S4 and S5 plays an important role in translational accuracy. Interacts with and stabilizes bases of the 16S rRNA that are involved in tRNA selection in the A site and with the mRNA backbone. Located at the interface of the 30S and 50S subunits, it traverses the body of the 30S subunit contacting proteins on the other side and probably holding the rRNA structure together. The combined cluster of proteins S8, S12 and S17 appears to hold together the shoulder and platform of the 30S subunit. The protein is Small ribosomal subunit protein uS12 of Clostridium acetobutylicum (strain ATCC 824 / DSM 792 / JCM 1419 / IAM 19013 / LMG 5710 / NBRC 13948 / NRRL B-527 / VKM B-1787 / 2291 / W).